Here is a 580-residue protein sequence, read N- to C-terminus: tRNA-guanine(15) transglycosylase (580 aa).

Asp-91 functions as the Nucleophile in the catalytic mechanism. Substrate-binding residues include Asp-126 and Ala-192. Cys-275, Cys-277, and Cys-280 together coordinate Zn(2+). The PUA domain maps to 504-579 (RMRVVVDEDA…LAVKVRRGVE (76 aa)).

It belongs to the archaeosine tRNA-ribosyltransferase family. Zn(2+) is required as a cofactor.

It carries out the reaction guanosine(15) in tRNA + 7-cyano-7-deazaguanine = 7-cyano-7-carbaguanosine(15) in tRNA + guanine. Its pathway is tRNA modification; archaeosine-tRNA biosynthesis. Its function is as follows. Exchanges the guanine residue with 7-cyano-7-deazaguanine (preQ0) at position 15 in the dihydrouridine loop (D-loop) of archaeal tRNAs. This is tRNA-guanine(15) transglycosylase from Thermococcus onnurineus (strain NA1).